The sequence spans 640 residues: Chaperone protein HtpG (640 aa).

The segment at 1 to 348 (MADVAHQETH…SNDLPLNVSR (348 aa)) is a; substrate-binding. The b stretch occupies residues 349–565 (EILQDNKITQ…GTGMSTQMIK (217 aa)). Positions 566 to 640 (LMQAAGQPVP…LNTLLMNLAK (75 aa)) are c.

The protein belongs to the heat shock protein 90 family. In terms of assembly, homodimer.

The protein resides in the cytoplasm. Functionally, molecular chaperone. Has ATPase activity. The sequence is that of Chaperone protein HtpG from Pseudoalteromonas atlantica (strain T6c / ATCC BAA-1087).